The following is a 217-amino-acid chain: tRNA (guanine-N(7)-)-methyltransferase (217 aa).

Glutamate 48, glutamate 73, asparagine 100, and aspartate 123 together coordinate S-adenosyl-L-methionine. The active site involves aspartate 123. Residues lysine 127 and aspartate 159 each contribute to the substrate site.

Belongs to the class I-like SAM-binding methyltransferase superfamily. TrmB family.

The enzyme catalyses guanosine(46) in tRNA + S-adenosyl-L-methionine = N(7)-methylguanosine(46) in tRNA + S-adenosyl-L-homocysteine. The protein operates within tRNA modification; N(7)-methylguanine-tRNA biosynthesis. Functionally, catalyzes the formation of N(7)-methylguanine at position 46 (m7G46) in tRNA. The protein is tRNA (guanine-N(7)-)-methyltransferase of Leptospira interrogans serogroup Icterohaemorrhagiae serovar copenhageni (strain Fiocruz L1-130).